The chain runs to 423 residues: Haloacid dehalogenase-like hydrolase domain-containing 5 (423 aa).

The first 23 residues, 1 to 23 (MAAWGCVAALGAARGLCWRAARA), serve as a signal peptide directing secretion.

This sequence belongs to the HAD-like hydrolase superfamily. As to expression, widely expressed.

This chain is Haloacid dehalogenase-like hydrolase domain-containing 5, found in Homo sapiens (Human).